The sequence spans 201 residues: Large ribosomal subunit protein uL4 (201 aa).

Residues 46–71 (QKTRAEVIGSGKKPWRQKGTGRARAG) are disordered.

Belongs to the universal ribosomal protein uL4 family. In terms of assembly, part of the 50S ribosomal subunit.

In terms of biological role, one of the primary rRNA binding proteins, this protein initially binds near the 5'-end of the 23S rRNA. It is important during the early stages of 50S assembly. It makes multiple contacts with different domains of the 23S rRNA in the assembled 50S subunit and ribosome. Its function is as follows. Forms part of the polypeptide exit tunnel. This chain is Large ribosomal subunit protein uL4, found in Shewanella sediminis (strain HAW-EB3).